A 569-amino-acid polypeptide reads, in one-letter code: Rab GTPase-binding effector protein 2 (569 aa).

Disordered regions lie at residues M1–S41, I180–S265, and R388–P411. Residue A2 is modified to N-acetylalanine. A coiled-coil region spans residues E34–A187. S189 and S193 each carry phosphoserine. Phosphoserine; by GSK3-alpha is present on S200. Residue S204 is modified to Phosphoserine. Composition is skewed to low complexity over residues S245–S257 and P393–E403. Residues D289 to Q523 are a coiled coil.

It belongs to the rabaptin family. In terms of assembly, heterodimer with RABGEF1. The dimer binds RAB5A that has been activated by GTP-binding. Interacts with SDCCAG8; this interaction is important for ciliogenesis regulation. Interacts with RAB4A; this interaction may mediate VEGFR2 cell surface expression.

The protein localises to the cytoplasm. It is found in the early endosome. Its subcellular location is the cytoskeleton. The protein resides in the microtubule organizing center. It localises to the centrosome. The protein localises to the cilium basal body. Its function is as follows. Plays a role in membrane trafficking and in homotypic early endosome fusion. Participates in arteriogenesis by regulating vascular endothelial growth factor receptor 2/VEGFR2 cell surface expression and endosomal trafficking. By interacting with SDCCAG8, localizes to centrosomes and plays a critical role in ciliogenesis. The chain is Rab GTPase-binding effector protein 2 (RABEP2) from Homo sapiens (Human).